The following is a 235-amino-acid chain: Phosphoribosylaminoimidazole-succinocarboxamide synthase (235 aa).

The protein belongs to the SAICAR synthetase family.

The catalysed reaction is 5-amino-1-(5-phospho-D-ribosyl)imidazole-4-carboxylate + L-aspartate + ATP = (2S)-2-[5-amino-1-(5-phospho-beta-D-ribosyl)imidazole-4-carboxamido]succinate + ADP + phosphate + 2 H(+). The protein operates within purine metabolism; IMP biosynthesis via de novo pathway; 5-amino-1-(5-phospho-D-ribosyl)imidazole-4-carboxamide from 5-amino-1-(5-phospho-D-ribosyl)imidazole-4-carboxylate: step 1/2. The polypeptide is Phosphoribosylaminoimidazole-succinocarboxamide synthase (Streptococcus sanguinis (strain SK36)).